The following is a 519-amino-acid chain: Matrix metalloproteinase-B (519 aa).

The first 26 residues, 1 to 26 (MTKWSPNGNPLSTIYLILSLFTLAHT), serve as a signal peptide directing secretion. Residues 27 to 126 (APTTQHSRTT…RQEQTKRTKR (100 aa)) constitute a propeptide, activation peptide. A compositionally biased stretch (polar residues) spans 29–39 (TTQHSRTTTQL). Residues 29-50 (TTQHSRTTTQLRLEDEDGGGGV) form a disordered region. Residues 109–116 (PRCTQTDV) carry the Cysteine switch motif. Zn(2+) contacts are provided by Cys-111, His-208, Asp-210, His-232, His-247, and His-276. Glu-277 is a catalytic residue. Zn(2+)-binding residues include His-280 and His-286. An N-linked (GlcNAc...) asparagine glycan is attached at Asn-341. Residues 391-402 (KDKRSYRGDSKI) are compositionally biased toward basic and acidic residues. The tract at residues 391–410 (KDKRSYRGDSKIPKCSSNNS) is disordered. N-linked (GlcNAc...) asparagine glycosylation is present at Asn-408.

The protein belongs to the peptidase M10A family. It depends on Zn(2+) as a cofactor. Expressed in spermatheca and spermathecal-uterine valve, weakly in vulva and anal muscles and in two cells in the head (probably RMEV and RMED motor neurons).

It is found in the secreted. The protein resides in the extracellular space. The protein localises to the extracellular matrix. Inhibited by human TIMP1 and TIMP2 and the broad MMP inhibitors BB94 (Batimastat) and CT543. In terms of biological role, metalloprotease involved in molting, a process during larval stages in which a new cuticle is formed and the old cuticle is shed. Plays a role in thermotolerance probably by preventing the accumulation of oxidized lipoproteins and cholesterol. The sequence is that of Matrix metalloproteinase-B from Caenorhabditis elegans.